The sequence spans 91 residues: Probable Fe(2+)-trafficking protein (91 aa).

Belongs to the Fe(2+)-trafficking protein family.

Functionally, could be a mediator in iron transactions between iron acquisition and iron-requiring processes, such as synthesis and/or repair of Fe-S clusters in biosynthetic enzymes. The chain is Probable Fe(2+)-trafficking protein from Glaesserella parasuis serovar 5 (strain SH0165) (Haemophilus parasuis).